The chain runs to 229 residues: Putative N-acetylmannosamine-6-phosphate 2-epimerase (229 aa).

The protein belongs to the NanE family.

It catalyses the reaction an N-acyl-D-glucosamine 6-phosphate = an N-acyl-D-mannosamine 6-phosphate. Its pathway is amino-sugar metabolism; N-acetylneuraminate degradation; D-fructose 6-phosphate from N-acetylneuraminate: step 3/5. Its function is as follows. Converts N-acetylmannosamine-6-phosphate (ManNAc-6-P) to N-acetylglucosamine-6-phosphate (GlcNAc-6-P). The polypeptide is Putative N-acetylmannosamine-6-phosphate 2-epimerase (Actinobacillus pleuropneumoniae serotype 3 (strain JL03)).